A 242-amino-acid polypeptide reads, in one-letter code: Type III pantothenate kinase (242 aa).

5-12 (DLGNTRLK) lines the ATP pocket. Substrate contacts are provided by residues Tyr-94 and 100–103 (GCDR). Asp-102 serves as the catalytic Proton acceptor. Position 124 (Thr-124) interacts with ATP. Residue Thr-175 coordinates substrate.

Belongs to the type III pantothenate kinase family. Homodimer. The cofactor is NH4(+). It depends on K(+) as a cofactor.

It is found in the cytoplasm. It carries out the reaction (R)-pantothenate + ATP = (R)-4'-phosphopantothenate + ADP + H(+). It functions in the pathway cofactor biosynthesis; coenzyme A biosynthesis; CoA from (R)-pantothenate: step 1/5. Functionally, catalyzes the phosphorylation of pantothenate (Pan), the first step in CoA biosynthesis. In Psychrobacter arcticus (strain DSM 17307 / VKM B-2377 / 273-4), this protein is Type III pantothenate kinase.